The following is a 707-amino-acid chain: MLNPIVRKFQYGQHTITLETGIMARQATAAVMASMDDTAVFVTVVGEKTTNSSQKFFPLTVNYQERTYAVGRIPGGFFRREGRPSENEILTARLIDRPIRPLFPKGFCNEIQIIATVVSVNPQINPDIISIIGASAALSLSGIPFYGPIGAARVGFVNNQYVLNPTIDDMKSSFLDLVVSGTQNAVLMVEAESKVLSEDKILGAIMFGHQQQQVVINNIRSLSNEASKLPWIISYPEINTELELKITKLAEKDISNAYLIFNKQERYEKLNFLKEEIIKLFFSENSNIDISEIEDIFEKIEKNIVRKRILNNENRIDGREKDMIRALDIRTGVLPRTHGSSLFTRGETQSLVSVTLGTSRDAQNLDELLGDKTDNFLFHYNFPPYSVGEIGIVGSPKRREIGHGRLAKRSLLAVMPKLDDFPYTIRIVSEITESNGSSSMASVCGASLALMDAGVPIKSAVAGISMGLVKEGDKYVLLSDILGDEDHLGDMDFKVSGTEEGITALQMDIKIEGITNEIMRIALNKAKSARLHILNVMKQALSKPRNEISEFAPRIHKIKINPEKIKDVIGKGGSVIRMLTEETGTIIEIEDDGTIKISATIGEKAKNAIRRIEEITAEIEVGRIYSGKVTRIVDFGAFISIGIGKEGLVHISQISNKRVEKVSDHLTVDQIISVKVLEIDRQGRLRLSIKEVENSIISNKSINNIYI.

Mg(2+) contacts are provided by Asp-486 and Asp-492. Residues Pro-553–Ile-612 enclose the KH domain. The region spanning Gly-622–Lys-690 is the S1 motif domain.

The protein belongs to the polyribonucleotide nucleotidyltransferase family. In terms of assembly, component of the RNA degradosome, which is a multiprotein complex involved in RNA processing and mRNA degradation. Mg(2+) is required as a cofactor.

It is found in the cytoplasm. The enzyme catalyses RNA(n+1) + phosphate = RNA(n) + a ribonucleoside 5'-diphosphate. Involved in mRNA degradation. Catalyzes the phosphorolysis of single-stranded polyribonucleotides processively in the 3'- to 5'-direction. In Buchnera aphidicola subsp. Schizaphis graminum (strain Sg), this protein is Polyribonucleotide nucleotidyltransferase.